The following is a 41-amino-acid chain: Large ribosomal subunit protein bL36 (41 aa).

This sequence belongs to the bacterial ribosomal protein bL36 family.

This Orientia tsutsugamushi (strain Boryong) (Rickettsia tsutsugamushi) protein is Large ribosomal subunit protein bL36.